The sequence spans 324 residues: Beta-ketoacyl-[acyl-carrier-protein] synthase III (324 aa).

Active-site residues include cysteine 114 and histidine 251. The interval 252 to 256 is ACP-binding; sequence QANQR. Residue asparagine 281 is part of the active site.

It belongs to the thiolase-like superfamily. FabH family. In terms of assembly, homodimer.

It is found in the cytoplasm. It carries out the reaction malonyl-[ACP] + acetyl-CoA + H(+) = 3-oxobutanoyl-[ACP] + CO2 + CoA. The protein operates within lipid metabolism; fatty acid biosynthesis. Its function is as follows. Catalyzes the condensation reaction of fatty acid synthesis by the addition to an acyl acceptor of two carbons from malonyl-ACP. Catalyzes the first condensation reaction which initiates fatty acid synthesis and may therefore play a role in governing the total rate of fatty acid production. Possesses both acetoacetyl-ACP synthase and acetyl transacylase activities. Its substrate specificity determines the biosynthesis of branched-chain and/or straight-chain of fatty acids. This is Beta-ketoacyl-[acyl-carrier-protein] synthase III from Rhodospirillum rubrum (strain ATCC 11170 / ATH 1.1.1 / DSM 467 / LMG 4362 / NCIMB 8255 / S1).